Consider the following 214-residue polypeptide: GTP cyclohydrolase 1 (214 aa).

3 residues coordinate Zn(2+): cysteine 108, histidine 111, and cysteine 179.

The protein belongs to the GTP cyclohydrolase I family. Toroid-shaped homodecamer, composed of two pentamers of five dimers.

The enzyme catalyses GTP + H2O = 7,8-dihydroneopterin 3'-triphosphate + formate + H(+). It functions in the pathway cofactor biosynthesis; 7,8-dihydroneopterin triphosphate biosynthesis; 7,8-dihydroneopterin triphosphate from GTP: step 1/1. This is GTP cyclohydrolase 1 from Shewanella putrefaciens (strain CN-32 / ATCC BAA-453).